Here is a 480-residue protein sequence, read N- to C-terminus: MTEAEKIEVRDITRIERIGAHSHIRGLGLDDVLEARAVSQGMVGQKDARRAAGVVVQMVREGKIAGRCILLAGEPSTGKTAIAVGMAQALGTETPFTSMSGSEIYSLEMSKTEALSQALRKSIGVRIKEETEIIEGEVVEIQIERPATGTGQKVGKVTLKTTEMETNYDLGNKIIECFMKEKIQAGDVITIDKASGKVNKLGRSFTRARDYDATGAQTRFVQCPEGELQKRKEVVHTVTLHEIDVINSRTHGFLALFSGDTGEIKQEVRDQINNKVLEWREEGKAEINPGVLFIDEVHMLDIECFSYLNRALESDMAPVVVMATNRGITRIRGTNYRSPHGIPIDLLDRMIIIRTVPYSEKEVKEILKIRCEEEDCVMHPDALTILTRIATDTSLRYAIQLITTANLVCRRRKATEVNTEDVKKVYSLFLDENRSSKILKEYQDDYMFSEITEKEEDFGIGGGSKRRLDIGAGDAEAMEH.

73–80 (GEPSTGKT) provides a ligand contact to ATP.

This sequence belongs to the RuvB family. In terms of assembly, forms homohexameric rings. May form a dodecamer with rept made of two stacked hexameric rings. Component of the chromatin remodeling Ino80 complex.

It is found in the nucleus. The enzyme catalyses ATP + H2O = ADP + phosphate + H(+). In terms of biological role, acts as a transcriptional coactivator in Wg signaling caused by altered arm signaling. Pont and rept interfere antagonistically with nuclear arm signaling function, and are required to enhance or reduce arm activity, respectively. Also an essential cofactor for the normal function of Myc; required for cellular proliferation and growth. Functionally, proposed core component of the chromatin remodeling Ino80 complex which is involved in transcriptional regulation, DNA replication and probably DNA repair. The sequence is that of RuvB-like helicase 2 from Drosophila pseudoobscura pseudoobscura (Fruit fly).